A 134-amino-acid chain; its full sequence is Protein NrdI (134 aa).

The protein belongs to the NrdI family.

Probably involved in ribonucleotide reductase function. This chain is Protein NrdI, found in Chromohalobacter salexigens (strain ATCC BAA-138 / DSM 3043 / CIP 106854 / NCIMB 13768 / 1H11).